The following is an 86-amino-acid chain: Large ribosomal subunit protein bL27c (86 aa).

Residues 1 to 27 are disordered; that stretch reads MAHKKGSGSTRNGRDSNSKRLGVKKYG.

Belongs to the bacterial ribosomal protein bL27 family.

The protein localises to the plastid. It is found in the chloroplast. The sequence is that of Large ribosomal subunit protein bL27c from Pyropia yezoensis (Susabi-nori).